A 175-amino-acid polypeptide reads, in one-letter code: Large ribosomal subunit protein uL10 (175 aa).

The protein belongs to the universal ribosomal protein uL10 family. Part of the ribosomal stalk of the 50S ribosomal subunit. The N-terminus interacts with L11 and the large rRNA to form the base of the stalk. The C-terminus forms an elongated spine to which L12 dimers bind in a sequential fashion forming a multimeric L10(L12)X complex.

Its function is as follows. Forms part of the ribosomal stalk, playing a central role in the interaction of the ribosome with GTP-bound translation factors. This Synechococcus sp. (strain CC9311) protein is Large ribosomal subunit protein uL10.